The chain runs to 201 residues: 3-isopropylmalate dehydratase small subunit (201 aa).

This sequence belongs to the LeuD family. LeuD type 1 subfamily. Heterodimer of LeuC and LeuD.

It catalyses the reaction (2R,3S)-3-isopropylmalate = (2S)-2-isopropylmalate. It participates in amino-acid biosynthesis; L-leucine biosynthesis; L-leucine from 3-methyl-2-oxobutanoate: step 2/4. Its function is as follows. Catalyzes the isomerization between 2-isopropylmalate and 3-isopropylmalate, via the formation of 2-isopropylmaleate. This Rhodopseudomonas palustris (strain ATCC BAA-98 / CGA009) protein is 3-isopropylmalate dehydratase small subunit.